The primary structure comprises 201 residues: Ribosome maturation factor RimP (201 aa).

Positions 180 to 201 (LRRGSAPAQDEEGEDEAPGAPL) are disordered. Residues 188-201 (QDEEGEDEAPGAPL) show a composition bias toward acidic residues.

This sequence belongs to the RimP family.

It localises to the cytoplasm. Its function is as follows. Required for maturation of 30S ribosomal subunits. The chain is Ribosome maturation factor RimP from Methylobacterium sp. (strain 4-46).